Consider the following 453-residue polypeptide: Protein ECM18 (453 aa).

The 306-residue stretch at 130-435 folds into the AB hydrolase-1 domain; sequence LLIHGYAASS…SGHNLFLDNP (306 aa). The HXXXXD motif motif lies at 428–433; the sequence is HNLFLD.

This sequence belongs to the peptidase S33 family. ABHD4/ABHD5 subfamily.

The protein localises to the mitochondrion. In terms of biological role, may be involved in cell wall organization and biogenesis. The sequence is that of Protein ECM18 (ECM18) from Saccharomyces cerevisiae (strain ATCC 204508 / S288c) (Baker's yeast).